The chain runs to 572 residues: Protein 5NUC (572 aa).

A signal peptide spans Met1–Ala25. Residues Asp39 and His41 each contribute to the Zn(2+) site. Cys54 and Cys64 form a disulfide bridge. An N-linked (GlcNAc...) asparagine glycan is attached at Asn82. Zn(2+) contacts are provided by Asp93, Asn125, His227, and His250. A disulfide bridge links Cys360 with Cys365. Substrate is bound by residues Arg361, Gln399, Arg404, and Phe427. Asn454 and Asn490 each carry an N-linked (GlcNAc...) asparagine glycan. Cys488 and Cys491 are joined by a disulfide. Phe512–Asp518 contributes to the substrate binding site.

It belongs to the 5'-nucleotidase family. Requires Zn(2+) as cofactor.

The catalysed reaction is UDP-sugar + H2O = UMP + alpha-D-aldose 1-phosphate.. It catalyses the reaction a ribonucleoside 5'-phosphate + H2O = a ribonucleoside + phosphate. Degradation of external UDP-glucose to uridine monophosphate and glucose-1-phosphate, which can then be used by the cell. This chain is Protein 5NUC (5NUC), found in Lutzomyia longipalpis (Sand fly).